Consider the following 463-residue polypeptide: Cysteine--tRNA ligase (463 aa).

Residue Cys29 participates in Zn(2+) binding. The short motif at Pro31 to Asn41 is the 'HIGH' region element. Residues Cys211, His236, and Glu240 each coordinate Zn(2+). Positions Lys269 to Ser273 match the 'KMSKS' region motif. Lys272 is an ATP binding site.

This sequence belongs to the class-I aminoacyl-tRNA synthetase family. Monomer. Zn(2+) serves as cofactor.

It localises to the cytoplasm. It catalyses the reaction tRNA(Cys) + L-cysteine + ATP = L-cysteinyl-tRNA(Cys) + AMP + diphosphate. In Caulobacter vibrioides (strain ATCC 19089 / CIP 103742 / CB 15) (Caulobacter crescentus), this protein is Cysteine--tRNA ligase.